A 539-amino-acid polypeptide reads, in one-letter code: Bifunctional purine biosynthesis protein PurH (539 aa).

In terms of domain architecture, MGS-like spans 8–159; sequence FPIPDLHRVR…KNYAYTGVVT (152 aa).

This sequence belongs to the PurH family.

The enzyme catalyses (6R)-10-formyltetrahydrofolate + 5-amino-1-(5-phospho-beta-D-ribosyl)imidazole-4-carboxamide = 5-formamido-1-(5-phospho-D-ribosyl)imidazole-4-carboxamide + (6S)-5,6,7,8-tetrahydrofolate. It catalyses the reaction IMP + H2O = 5-formamido-1-(5-phospho-D-ribosyl)imidazole-4-carboxamide. It functions in the pathway purine metabolism; IMP biosynthesis via de novo pathway; 5-formamido-1-(5-phospho-D-ribosyl)imidazole-4-carboxamide from 5-amino-1-(5-phospho-D-ribosyl)imidazole-4-carboxamide (10-formyl THF route): step 1/1. The protein operates within purine metabolism; IMP biosynthesis via de novo pathway; IMP from 5-formamido-1-(5-phospho-D-ribosyl)imidazole-4-carboxamide: step 1/1. The protein is Bifunctional purine biosynthesis protein PurH of Bartonella tribocorum (strain CIP 105476 / IBS 506).